A 237-amino-acid polypeptide reads, in one-letter code: Ribonuclease PH (237 aa).

Residues arginine 86 and 124–126 (GTR) each bind phosphate.

It belongs to the RNase PH family. Homohexameric ring arranged as a trimer of dimers.

The catalysed reaction is tRNA(n+1) + phosphate = tRNA(n) + a ribonucleoside 5'-diphosphate. In terms of biological role, phosphorolytic 3'-5' exoribonuclease that plays an important role in tRNA 3'-end maturation. Removes nucleotide residues following the 3'-CCA terminus of tRNAs; can also add nucleotides to the ends of RNA molecules by using nucleoside diphosphates as substrates, but this may not be physiologically important. Probably plays a role in initiation of 16S rRNA degradation (leading to ribosome degradation) during starvation. The polypeptide is Ribonuclease PH (Methylobacterium radiotolerans (strain ATCC 27329 / DSM 1819 / JCM 2831 / NBRC 15690 / NCIMB 10815 / 0-1)).